The following is a 196-amino-acid chain: Ribosome maturation factor RimM (196 aa).

A PRC barrel domain is found at 118-196 (QGEYYWRDLI…EMTVDWDPDF (79 aa)).

This sequence belongs to the RimM family. In terms of assembly, binds ribosomal protein uS19.

It is found in the cytoplasm. An accessory protein needed during the final step in the assembly of 30S ribosomal subunit, possibly for assembly of the head region. Essential for efficient processing of 16S rRNA. May be needed both before and after RbfA during the maturation of 16S rRNA. It has affinity for free ribosomal 30S subunits but not for 70S ribosomes. This is Ribosome maturation factor RimM from Alcanivorax borkumensis (strain ATCC 700651 / DSM 11573 / NCIMB 13689 / SK2).